The sequence spans 248 residues: MALYRSRGIVLRSIRYGEADRILDIYTRDAGLVSCIAKGIRRTRSRFGARLEPFSCVDFMAYRGRTLDTITQAESLRSFRGVRERLDRLQAAAGMAGVLHALSGGTPDRRTFNLLYRALDALEKGEEGFGMIEASFGLKLAVLSGYAPRLDGCAECGGDVPGEGARFAPAAGGFLCRDCRSDAPPDSFPVPPGTLGRLRELAALPLAEAASGRGLEEALRRVVRAHVLAHAPGAASLATPAGTAGGRP.

Belongs to the RecO family.

In terms of biological role, involved in DNA repair and RecF pathway recombination. This is DNA repair protein RecO from Rubrobacter xylanophilus (strain DSM 9941 / JCM 11954 / NBRC 16129 / PRD-1).